Consider the following 71-residue polypeptide: DNA-directed RNA polymerase subunit omega (71 aa).

It belongs to the RNA polymerase subunit omega family. In terms of assembly, the RNAP catalytic core consists of 2 alpha, 1 beta, 1 beta' and 1 omega subunit. When a sigma factor is associated with the core the holoenzyme is formed, which can initiate transcription.

The catalysed reaction is RNA(n) + a ribonucleoside 5'-triphosphate = RNA(n+1) + diphosphate. In terms of biological role, promotes RNA polymerase assembly. Latches the N- and C-terminal regions of the beta' subunit thereby facilitating its interaction with the beta and alpha subunits. This Campylobacter curvus (strain 525.92) protein is DNA-directed RNA polymerase subunit omega.